The sequence spans 122 residues: Large ribosomal subunit protein uL14 (122 aa).

The protein belongs to the universal ribosomal protein uL14 family. As to quaternary structure, part of the 50S ribosomal subunit. Forms a cluster with proteins L3 and L19. In the 70S ribosome, L14 and L19 interact and together make contacts with the 16S rRNA in bridges B5 and B8.

Its function is as follows. Binds to 23S rRNA. Forms part of two intersubunit bridges in the 70S ribosome. The chain is Large ribosomal subunit protein uL14 from Borrelia recurrentis (strain A1).